Here is a 337-residue protein sequence, read N- to C-terminus: Putative 4-hydroxythreonine-4-phosphate dehydrogenase 2 (337 aa).

His-173, His-217, and His-274 together coordinate a divalent metal cation.

Belongs to the PdxA family. Homodimer. The cofactor is Zn(2+). Mg(2+) is required as a cofactor. It depends on Co(2+) as a cofactor.

It is found in the cytoplasm. It carries out the reaction 4-(phosphooxy)-L-threonine + NAD(+) = 3-amino-2-oxopropyl phosphate + CO2 + NADH. It functions in the pathway cofactor biosynthesis; pyridoxine 5'-phosphate biosynthesis; pyridoxine 5'-phosphate from D-erythrose 4-phosphate: step 4/5. Functionally, catalyzes the NAD(P)-dependent oxidation of 4-(phosphooxy)-L-threonine (HTP) into 2-amino-3-oxo-4-(phosphooxy)butyric acid which spontaneously decarboxylates to form 3-amino-2-oxopropyl phosphate (AHAP). This is Putative 4-hydroxythreonine-4-phosphate dehydrogenase 2 from Pseudomonas aeruginosa (strain ATCC 15692 / DSM 22644 / CIP 104116 / JCM 14847 / LMG 12228 / 1C / PRS 101 / PAO1).